Here is a 180-residue protein sequence, read N- to C-terminus: Acireductone dioxygenase (180 aa).

Fe(2+)-binding residues include His-97, His-99, Glu-103, and His-141. 4 residues coordinate Ni(2+): His-97, His-99, Glu-103, and His-141.

The protein belongs to the acireductone dioxygenase (ARD) family. In terms of assembly, monomer. The cofactor is Fe(2+). Requires Ni(2+) as cofactor.

The enzyme catalyses 1,2-dihydroxy-5-(methylsulfanyl)pent-1-en-3-one + O2 = 3-(methylsulfanyl)propanoate + CO + formate + 2 H(+). It catalyses the reaction 1,2-dihydroxy-5-(methylsulfanyl)pent-1-en-3-one + O2 = 4-methylsulfanyl-2-oxobutanoate + formate + 2 H(+). Its pathway is amino-acid biosynthesis; L-methionine biosynthesis via salvage pathway; L-methionine from S-methyl-5-thio-alpha-D-ribose 1-phosphate: step 5/6. In terms of biological role, catalyzes 2 different reactions between oxygen and the acireductone 1,2-dihydroxy-3-keto-5-methylthiopentene (DHK-MTPene) depending upon the metal bound in the active site. Fe-containing acireductone dioxygenase (Fe-ARD) produces formate and 2-keto-4-methylthiobutyrate (KMTB), the alpha-ketoacid precursor of methionine in the methionine recycle pathway. Ni-containing acireductone dioxygenase (Ni-ARD) produces methylthiopropionate, carbon monoxide and formate, and does not lie on the methionine recycle pathway. This chain is Acireductone dioxygenase, found in Cronobacter sakazakii (Enterobacter sakazakii).